The sequence spans 101 residues: Ubiquitin-related modifier 1 (101 aa).

Gly101 carries the 1-thioglycine modification. Residue Gly101 forms a Glycyl lysine isopeptide (Gly-Lys) (interchain with K-? in acceptor proteins) linkage.

It belongs to the URM1 family. Post-translationally, C-terminal thiocarboxylation occurs in 2 steps, it is first acyl-adenylated (-COAMP) via the hesA/moeB/thiF part of UBA4, then thiocarboxylated (-COSH) via the rhodanese domain of UBA4.

Its subcellular location is the cytoplasm. It participates in tRNA modification; 5-methoxycarbonylmethyl-2-thiouridine-tRNA biosynthesis. Functionally, acts as a sulfur carrier required for 2-thiolation of mcm(5)S(2)U at tRNA wobble positions of cytosolic tRNA(Lys), tRNA(Glu) and tRNA(Gln). Serves as sulfur donor in tRNA 2-thiolation reaction by being thiocarboxylated (-COSH) at its C-terminus by the MOCS3 homolog UBA4. The sulfur is then transferred to tRNA to form 2-thiolation of mcm(5)S(2)U. Prior mcm(5) tRNA modification by the elongator complex is required for 2-thiolation. Also acts as a ubiquitin-like protein (UBL) that is covalently conjugated via an isopeptide bond to lysine residues of target proteins such as AHP1. The thiocarboxylated form serves as substrate for conjugation and oxidative stress specifically induces the formation of UBL-protein conjugates. The sequence is that of Ubiquitin-related modifier 1 from Kluyveromyces lactis (strain ATCC 8585 / CBS 2359 / DSM 70799 / NBRC 1267 / NRRL Y-1140 / WM37) (Yeast).